Consider the following 1379-residue polypeptide: DNA-directed RNA polymerase subunit beta'' (1379 aa).

Zn(2+) is bound by residues Cys220, Cys293, Cys300, and Cys303.

The protein belongs to the RNA polymerase beta' chain family. RpoC2 subfamily. In terms of assembly, in plastids the minimal PEP RNA polymerase catalytic core is composed of four subunits: alpha, beta, beta', and beta''. When a (nuclear-encoded) sigma factor is associated with the core the holoenzyme is formed, which can initiate transcription. Requires Zn(2+) as cofactor.

It localises to the plastid. The protein resides in the chloroplast. It carries out the reaction RNA(n) + a ribonucleoside 5'-triphosphate = RNA(n+1) + diphosphate. Functionally, DNA-dependent RNA polymerase catalyzes the transcription of DNA into RNA using the four ribonucleoside triphosphates as substrates. This Crucihimalaya wallichii (Rock-cress) protein is DNA-directed RNA polymerase subunit beta''.